Reading from the N-terminus, the 434-residue chain is MATLKTFRTLVQLKHKLGKAYEIVGEPRLPKWFHVEYLEDPKKMYVEPTLVEIMFGKDGEHIPHVECTLHVLIHVNVWGPEKQAEILIFGPPNFQKDVAQMLSNVAHFCRMKLMEKEALEAGVERRLMAASKATTQPTPVKVRDAATQVAPVQVRDAAIQPAPVKVRDAATQVAPVQVHEVATQPVPVQVRDAATQPVPVRVRDAATQPVPVRVRDAATQPVPVRVRDAATQPVPVRVRDAATEPVPVQVRDAATQPAPVQVRDAATQPAPVQVRDAATQPAPVQVRDAATQPAPVQVRDAATQPAPVQVRDAATQPAPVQVRDAATQPAPVQVREAATQQTPVEVADDTQLVQLKAGEAFAQHTSGKVHQDVNGQSPIEVCEGATQRHSVDASEALSQKCPEDLEGGDTETSLDDSYVIIRPSRAVWEPFVML.

The interval 1-39 (MATLKTFRTLVQLKHKLGKAYEIVGEPRLPKWFHVEYLE) is involved in RNA binding. Positions 40-118 (DPKKMYVEPT…CRMKLMEKEA (79 aa)) constitute a KH; atypical domain. A phosphothreonine mark is found at threonine 267 and threonine 279. The interval 334–434 (VREAATQQTP…RAVWEPFVML (101 aa)) is required for interaction with NUMA1 and regulation of apoptosis in response to DNA damage.

The protein belongs to the KHDC1 family. In terms of assembly, component of the subcortical maternal complex (SCMC), at least composed of NLRP5, KHDC3, OOEP, and TLE6. Within the complex, interacts with NLRP5, KHDC3 and TLE6. The SCMC may facilitate translocation of its components between the nuclear and cytoplasmic compartments. Forms a scaffold complex with OOEP/FLOPED, and interacts with BLM and TRIM25 at DNA replication forks. Interacts with PARP1; the interaction is increased following the formation of DNA double-strand breaks. Interacts (via C-terminus) with NUMA1.

It is found in the cytoplasm. The protein resides in the cell cortex. Its subcellular location is the nucleus. The protein localises to the mitochondrion. It localises to the cytoskeleton. It is found in the microtubule organizing center. The protein resides in the centrosome. Its subcellular location is the chromosome. Functionally, component of the subcortical maternal complex (SCMC), a multiprotein complex that plays a key role in early embryonic development. The SCMC complex is a structural constituent of cytoplasmic lattices, which consist in fibrous structures found in the cytoplasm of oocytes and preimplantation embryos. They are required to store maternal proteins critical for embryonic development, such as proteins that control epigenetic reprogramming of the preimplantation embryo, and prevent their degradation or activation. KHDC3 ensures proper spindle assembly by regulating the localization of AURKA via RHOA signaling and of PLK1 via a RHOA-independent process. Required for the localization of MAD2L1 to kinetochores to enable spindle assembly checkpoint function. As part of the OOEP-KHDC3 scaffold, recruits BLM and TRIM25 to DNA replication forks, thereby promoting the ubiquitination of BLM by TRIM25, enhancing BLM retainment at replication forks and therefore promoting stalled replication fork restart. Regulates homologous recombination-mediated DNA repair via recruitment of RAD51 to sites of DNA double-strand breaks, and sustainment of PARP1 activity, which in turn modulates downstream ATM or ATR activation. Activation of ATM or ATR in response to DNA double-strand breaks may be cell-type specific. Its role in DNA double-strand break repair is independent of its role in restarting stalled replication forks. Promotes neural stem cell neurogenesis and neuronal differentiation in the hippocampus. May regulate normal development of learning, memory and anxiety. Capable of binding RNA. This Rattus norvegicus (Rat) protein is KH domain-containing protein 3.